The chain runs to 429 residues: Adenylosuccinate synthetase (429 aa).

Residues 12–18 (GDEGKGK) and 40–42 (GHT) contribute to the GTP site. The active-site Proton acceptor is the D13. D13 and G40 together coordinate Mg(2+). IMP contacts are provided by residues 13 to 16 (DEGK), 38 to 41 (NAGH), T128, R142, Q223, T238, and R302. Residue H41 is the Proton donor of the active site. A substrate-binding site is contributed by 298-304 (TTTGRPR). Residues R304, 330-332 (SID), and 412-414 (SVG) each bind GTP.

It belongs to the adenylosuccinate synthetase family. Homodimer. The cofactor is Mg(2+).

It is found in the cytoplasm. The catalysed reaction is IMP + L-aspartate + GTP = N(6)-(1,2-dicarboxyethyl)-AMP + GDP + phosphate + 2 H(+). Its pathway is purine metabolism; AMP biosynthesis via de novo pathway; AMP from IMP: step 1/2. In terms of biological role, plays an important role in the de novo pathway of purine nucleotide biosynthesis. Catalyzes the first committed step in the biosynthesis of AMP from IMP. The sequence is that of Adenylosuccinate synthetase from Bacillus cereus (strain ATCC 14579 / DSM 31 / CCUG 7414 / JCM 2152 / NBRC 15305 / NCIMB 9373 / NCTC 2599 / NRRL B-3711).